Consider the following 312-residue polypeptide: Ribosomal RNA small subunit methyltransferase H (312 aa).

S-adenosyl-L-methionine is bound by residues 35-37 (GGH), aspartate 55, aspartate 101, and glutamine 108. The disordered stretch occupies residues 285-306 (ALKPSEHEVTENSRSRSSVLRV). Residues 287–298 (KPSEHEVTENSR) show a composition bias toward basic and acidic residues.

Belongs to the methyltransferase superfamily. RsmH family.

Its subcellular location is the cytoplasm. The catalysed reaction is cytidine(1402) in 16S rRNA + S-adenosyl-L-methionine = N(4)-methylcytidine(1402) in 16S rRNA + S-adenosyl-L-homocysteine + H(+). Functionally, specifically methylates the N4 position of cytidine in position 1402 (C1402) of 16S rRNA. The sequence is that of Ribosomal RNA small subunit methyltransferase H from Aeromonas salmonicida (strain A449).